A 166-amino-acid chain; its full sequence is Urocortin-3 (166 aa).

Positions 1–23 are cleaved as a signal peptide; the sequence is MLVPAPFLLVLLLLLGAPQVGLS. Positions 24–123 are excised as a propeptide; the sequence is QRSPKAGSSP…QDKAKSDRRT (100 aa). A compositionally biased stretch (basic and acidic residues) spans 41-51; it reads REAEKSQRKDT. The segment at 41 to 123 is disordered; that stretch reads REAEKSQRKD…QDKAKSDRRT (83 aa). Residues 68–77 show a composition bias toward acidic residues; that stretch reads EDQEGQEEED. A compositionally biased stretch (gly residues) spans 86 to 96; sequence SVGGGGGGGAG. The span at 113-123 shows a compositional bias: basic and acidic residues; sequence SQDKAKSDRRT. Isoleucine 162 carries the isoleucine amide modification.

Belongs to the sauvagine/corticotropin-releasing factor/urotensin I family. In terms of assembly, binds with high affinity to CRF receptors 2-alpha and 2-beta.

It localises to the secreted. In terms of biological role, suppresses food intake, delays gastric emptying and decreases heat-induced edema. Might represent an endogenous ligand for maintaining homeostasis after stress. In Bos taurus (Bovine), this protein is Urocortin-3 (UCN3).